A 377-amino-acid polypeptide reads, in one-letter code: Pseudouridylate synthase RPUSD4, mitochondrial (377 aa).

Residues 51 to 70 (LRAQKQQQKTKEPAPTNPVQ) are disordered. Residue Asp-153 is part of the active site.

This sequence belongs to the pseudouridine synthase RluA family. In terms of assembly, interacts with 16S mt-rRNA, mt-tRNA(Phe) and mt-tRNA(Met). Forms a regulatory protein-RNA complex, consisting of RCC1L, NGRN, RPUSD3, RPUSD4, TRUB2, FASTKD2 and 16S mt-rRNA.

The protein resides in the mitochondrion matrix. Its subcellular location is the nucleus. It is found in the cytoplasm. It carries out the reaction uridine in 5S rRNA = pseudouridine in 5S rRNA. The enzyme catalyses a uridine in tRNA = a pseudouridine in tRNA. It catalyses the reaction a uridine in mRNA = a pseudouridine in mRNA. Its function is as follows. Catalyzes uridine to pseudouridine isomerization (pseudouridylation) of different mitochondrial RNA substrates. Acts on position 1397 in 16S mitochondrial ribosomal RNA (16S mt-rRNA). This modification is required for the assembly of 16S mt-rRNA into a functional mitochondrial ribosome. As a component of a functional protein-RNA module, consisting of RCC1L, NGRN, RPUSD3, RPUSD4, TRUB2, FASTKD2 and 16S mt-rRNA, controls 16S mt-rRNA abundance and is required for intra-mitochondrial translation. Acts on position 39 in mitochondrial tRNA(Phe). Also catalyzes pseudouridylation of mRNAs in nucleus: acts as a regulator of pre-mRNA splicing by mediating pseudouridylation of pre-mRNAs at locations associated with alternatively spliced regions. Pseudouridylation of pre-mRNAs near splice sites directly regulates mRNA splicing and mRNA 3'-end processing. This chain is Pseudouridylate synthase RPUSD4, mitochondrial, found in Bos taurus (Bovine).